Here is a 552-residue protein sequence, read N- to C-terminus: Alcohol dehydrogenase [acceptor] (552 aa).

FAD is bound at residue 3–32 (DYIIVGAGSAGCVLANRLSADPSKRVCLLE). The active-site Proton acceptor is histidine 469.

It belongs to the GMC oxidoreductase family. FAD is required as a cofactor.

Its subcellular location is the cell inner membrane. It carries out the reaction a primary alcohol + A = an aldehyde + AH2. Converts aliphatic medium-chain-length alcohols into aldehydes. May be linked to the electron transfer chain. This Pseudomonas putida (Arthrobacter siderocapsulatus) protein is Alcohol dehydrogenase [acceptor] (alkJ).